The chain runs to 193 residues: Large ribosomal subunit protein bL9 (193 aa).

The disordered stretch occupies residues 155 to 193; the sequence is AEGETLTSAEAIYDIQEKPLAENQEEMNDNDANSINEQA. A compositionally biased stretch (polar residues) spans 184–193; the sequence is NDANSINEQA.

The protein belongs to the bacterial ribosomal protein bL9 family.

In terms of biological role, binds to the 23S rRNA. The polypeptide is Large ribosomal subunit protein bL9 (Bartonella quintana (strain Toulouse) (Rochalimaea quintana)).